The primary structure comprises 533 residues: Glucose-6-phosphate isomerase (533 aa).

E322 serves as the catalytic Proton donor. Catalysis depends on residues H351 and K455.

Belongs to the GPI family.

The protein localises to the cytoplasm. The enzyme catalyses alpha-D-glucose 6-phosphate = beta-D-fructose 6-phosphate. It participates in carbohydrate biosynthesis; gluconeogenesis. It functions in the pathway carbohydrate degradation; glycolysis; D-glyceraldehyde 3-phosphate and glycerone phosphate from D-glucose: step 2/4. Catalyzes the reversible isomerization of glucose-6-phosphate to fructose-6-phosphate. The protein is Glucose-6-phosphate isomerase of Desulfitobacterium hafniense (strain DSM 10664 / DCB-2).